Here is a 418-residue protein sequence, read N- to C-terminus: Synaptotagmin-15 (418 aa).

Over 1-4 the chain is Extracellular; the sequence is MAEQ. A helical; Signal-anchor for type III membrane protein transmembrane segment spans residues 5–27; sequence LAFLIGGIIGGLLLLIGVSCCLW. Topologically, residues 28 to 418 are cytoplasmic; it reads RRFCATFTYE…WHALCRPTEP (391 aa). C2 domains follow at residues 144 to 261 and 275 to 396; these read CLGR…HRII and EFGD…EHWG.

This sequence belongs to the synaptotagmin family. In terms of assembly, homodimer. Isoform 1 and isoform 2 are expressed in heart, lung, skeletal muscle and testis; not detected in brain, liver and kidney. Isoform 1 is expressed in spleen.

Its subcellular location is the membrane. Its function is as follows. May be involved in the trafficking and exocytosis of secretory vesicles in non-neuronal tissues. The chain is Synaptotagmin-15 (Syt15) from Mus musculus (Mouse).